We begin with the raw amino-acid sequence, 295 residues long: Fatty acyl-CoA reductase (295 aa).

21–28 (TGASSGIG) is a binding site for NADP(+). Residue Ser-153 coordinates substrate. Catalysis depends on Tyr-166, which acts as the Proton acceptor.

It belongs to the short-chain dehydrogenases/reductases (SDR) family.

It carries out the reaction hexadecanal + NADP(+) + CoA = hexadecanoyl-CoA + NADPH + H(+). Its function is as follows. Catalyzes the NADPH-dependent reduction of long chain acyl-CoA (with chain lengths of 14 to 22 carbons) to the corresponding aldehyde. The polypeptide is Fatty acyl-CoA reductase (acr1) (Acinetobacter baylyi (strain ATCC 33305 / BD413 / ADP1)).